The chain runs to 299 residues: MFRGSIPPLPTPFRRGRLDEEALRRLVERVVQGGSHGVSVGGTTGEPGTQTLEERKRAIEVVLDQVAGRVPVIPGTGALRLEETLELTRFAKEAGAQGAMVIVPYYVKPNQEGLYRYFAEVARTVPDFPLLIYNIPGRAGVEIAPKTVGRLRRDFPNIVGLKHSSKDLEYLSHLFLEAGRDFLVFCGLESLTLPMMSLGAVGTIAATANWLPKEVALLCEKALAGDYQGARELHFHLLEANEAIFWDTNPIPLKTVLSWMGLLEKEWRPPLGPTTPEVEERLRRMAERYGLLPKEKEAA.

A pyruvate-binding site is contributed by Thr44. Tyr133 acts as the Proton donor/acceptor in catalysis. Lys162 functions as the Schiff-base intermediate with substrate in the catalytic mechanism. Ile204 is a pyruvate binding site.

It belongs to the DapA family. As to quaternary structure, homotetramer; dimer of dimers.

Its subcellular location is the cytoplasm. It carries out the reaction L-aspartate 4-semialdehyde + pyruvate = (2S,4S)-4-hydroxy-2,3,4,5-tetrahydrodipicolinate + H2O + H(+). It participates in amino-acid biosynthesis; L-lysine biosynthesis via DAP pathway; (S)-tetrahydrodipicolinate from L-aspartate: step 3/4. Functionally, catalyzes the condensation of (S)-aspartate-beta-semialdehyde [(S)-ASA] and pyruvate to 4-hydroxy-tetrahydrodipicolinate (HTPA). This Thermus thermophilus (strain ATCC 27634 / DSM 579 / HB8) protein is 4-hydroxy-tetrahydrodipicolinate synthase.